Consider the following 102-residue polypeptide: Large ribosomal subunit protein bL21 (102 aa).

This sequence belongs to the bacterial ribosomal protein bL21 family. In terms of assembly, part of the 50S ribosomal subunit. Contacts protein L20.

This protein binds to 23S rRNA in the presence of protein L20. This Bifidobacterium animalis subsp. lactis (strain AD011) protein is Large ribosomal subunit protein bL21.